The sequence spans 393 residues: Venom metalloproteinase BumaMPs1 (393 aa).

Residues 1–15 form the signal peptide; it reads MFVHLLVLLFAAVEA. N-linked (GlcNAc...) asparagine glycosylation occurs at N158. Residues 167–377 enclose the Peptidase M12B domain; that stretch reads KCVKIEYVFV…RVEELITRRK (211 aa). Residue H323 coordinates Zn(2+). The active site involves E324. Positions 327 and 333 each coordinate Zn(2+). The segment at 378-393 is disintegrin-like domain; the sequence is INHCIVETCDGKRKRN.

This sequence belongs to the venom metalloproteinase (M12B) family. Requires Zn(2+) as cofactor. Contains several disulfide bonds. Expressed by the venom gland.

It localises to the secreted. Functionally, metalloprotease. The protein is Venom metalloproteinase BumaMPs1 of Olivierus martensii (Manchurian scorpion).